The chain runs to 435 residues: Chromatin structure-remodeling complex subunit RSC7 (435 aa).

The tract at residues 1 to 97 (MSDSEGGLAS…DKGVTRSRNR (97 aa)) is disordered. A compositionally biased stretch (acidic residues) spans 30-66 (DTEDLDIDENDENEDDDYREEEANEGVNEEEISDEEE). Ser-86 bears the Phosphoserine mark. The segment at 248-435 (ELRTKGNVIE…QNFEKCNEYI (188 aa)) is functional region; able to complement all NPL6 null allele phenotypes.

The protein belongs to the RSC7/SWP82 family. RSC7 subfamily. As to quaternary structure, interacts with ARP7, ARP9, RSC3, RSC8, RSC30 and STH1. Component of the two forms of the RSC complex composed of at least either RSC1 or RSC2, and ARP7, ARP9, LDB7, NPL6, RSC3, RSC30, RSC4, RSC58, RSC6, RSC8, RSC9, SFH1, STH1, HTL1 and probably RTT102. The complexes interact with histone and histone variant components of centromeric chromatin. Component of a fungal-specific module (HTL1-LDB7-NPL6-RSC3-RSC30) within the RSC complex.

It localises to the nucleus. Its function is as follows. Component of the chromatin structure remodeling complex (RSC), which is involved in transcription regulation and nucleosome positioning. RSC is responsible for the transfer of a histone octamer from a nucleosome core particle to naked DNA. The reaction requires ATP and involves an activated RSC-nucleosome intermediate. Remodeling reaction also involves DNA translocation, DNA twist and conformational change. As a reconfigurer of centromeric and flanking nucleosomes, RSC complex is required both for proper kinetochore function in chromosome segregation and, via a PKC1-dependent signaling pathway, for organization of the cellular cytoskeleton. Together with HTL1, LDB7, RSC3, RSC30 components, defines a fungal-specific module within the RSC complex that plays a role in many cellular functions including the maintenance of cell wall integrity. Acidic protein important for nuclear protein localization. This Saccharomyces cerevisiae (strain ATCC 204508 / S288c) (Baker's yeast) protein is Chromatin structure-remodeling complex subunit RSC7 (NPL6).